The primary structure comprises 246 residues: Small ribosomal subunit protein uS2 (246 aa).

It belongs to the universal ribosomal protein uS2 family.

This is Small ribosomal subunit protein uS2 from Azotobacter vinelandii (strain DJ / ATCC BAA-1303).